Here is a 501-residue protein sequence, read N- to C-terminus: Ribose import ATP-binding protein RbsA (501 aa).

ABC transporter domains follow at residues 5–241 (LQLK…VGRK) and 252–495 (APGD…VGKL). 37-44 (GENGAGKS) is a binding site for ATP.

It belongs to the ABC transporter superfamily. Ribose importer (TC 3.A.1.2.1) family. The complex is composed of an ATP-binding protein (RbsA), two transmembrane proteins (RbsC) and a solute-binding protein (RbsB).

The protein resides in the cell inner membrane. The enzyme catalyses D-ribose(out) + ATP + H2O = D-ribose(in) + ADP + phosphate + H(+). In terms of biological role, part of the ABC transporter complex RbsABC involved in ribose import. Responsible for energy coupling to the transport system. The chain is Ribose import ATP-binding protein RbsA from Escherichia coli (strain UTI89 / UPEC).